The following is a 170-amino-acid chain: Large ribosomal subunit protein uL16 (170 aa).

Belongs to the universal ribosomal protein uL16 family.

The sequence is that of Large ribosomal subunit protein uL16 from Methanospirillum hungatei JF-1 (strain ATCC 27890 / DSM 864 / NBRC 100397 / JF-1).